The sequence spans 214 residues: Cytochrome b (214 aa).

The next 4 membrane-spanning stretches (helical) occupy residues 31-51, 75-96, 111-131, and 176-196; these read FGSM…FLAI, WIMQ…YIHI, WLSG…GYVL, and FFAL…AHIL. Heme b is bound by residues Xaa-81 and His-95. His-180 and His-194 together coordinate heme b. Residue His-199 coordinates a ubiquinone.

Belongs to the cytochrome b family. In terms of assembly, the cytochrome bc1 complex contains 3 respiratory subunits (MT-CYB, CYC1 and UQCRFS1), 2 core proteins (UQCRC1 and UQCRC2) and probably 6 low-molecular weight proteins. Heme b is required as a cofactor.

The protein localises to the mitochondrion inner membrane. Its function is as follows. Component of the ubiquinol-cytochrome c reductase complex (complex III or cytochrome b-c1 complex) that is part of the mitochondrial respiratory chain. The b-c1 complex mediates electron transfer from ubiquinol to cytochrome c. Contributes to the generation of a proton gradient across the mitochondrial membrane that is then used for ATP synthesis. The protein is Cytochrome b (MT-CYB) of Bothriechis schlegelii (Eyelash palm pitviper).